The sequence spans 338 residues: Nuclear hormone receptor family member nhr-52 (338 aa).

The segment at residues 1–75 (MKCLVCCSYA…IGMRFSEPKQ (75 aa)) is a DNA-binding region (nuclear receptor). NR C4-type zinc fingers lie at residues 3–23 (CLVCCSYASSRNFGALSCSAC) and 39–63 (CKYDKKCFESFTILPKCQFCRFKKC). An NR LBD domain is found at 98–337 (KDGVHYSNFL…KKLVNDIIIR (240 aa)).

The protein belongs to the nuclear hormone receptor family.

It localises to the nucleus. Functionally, orphan nuclear receptor. This is Nuclear hormone receptor family member nhr-52 (nhr-52) from Caenorhabditis elegans.